Reading from the N-terminus, the 118-residue chain is uncharacterized protein (118 aa).

The N-terminal stretch at 1-22 (MKMSYLRSGIVGFLAGASLSYA) is a signal peptide. The stretch at 41-71 (TATEALETDKQLYKKIEKKIEELESSCVKKS) forms a coiled coil.

This is an uncharacterized protein from Schizosaccharomyces pombe (strain 972 / ATCC 24843) (Fission yeast).